We begin with the raw amino-acid sequence, 259 residues long: Insulin-induced gene 1 protein (259 aa).

The Cytoplasmic portion of the chain corresponds to 1–66 (MPRLHDHVWN…ARPGSWHHDL (66 aa)). The segment at 36–55 (PGVPEPEHAPRGQRAGTTGC) is disordered. A helical membrane pass occupies residues 67–89 (VQRSLVLFSFGVVLALVLNLLQI). Residues 90-108 (QRNVTLFPDEVIATIFSSA) lie on the Extracellular side of the membrane. A helical membrane pass occupies residues 109-126 (WWVPPCCGTAAAVVGLLY). Residues 127-141 (PCIDSHLGEPHKFKR) are Cytoplasmic-facing. Glycyl lysine isopeptide (Lys-Gly) (interchain with G-Cter in ubiquitin) cross-links involve residues Lys138 and Lys140. The chain crosses the membrane as a helical span at residues 142 to 164 (EWASVMRCIAVFVGINHASAKLD). Residues 165–167 (FAN) lie on the Extracellular side of the membrane. Residues 168–186 (NVQLSLTLAALSLGLWWTF) form a helical membrane-spanning segment. At 187 to 191 (DRSRS) the chain is on the cytoplasmic side. Ser189 carries the phosphoserine modification. The chain crosses the membrane as a helical span at residues 192–213 (GLGLGITIAFLATLITQFLVYN). The Extracellular portion of the chain corresponds to 214–227 (GVYQYTSPDFLYIR). A helical membrane pass occupies residues 228 to 245 (SWLPCIFFSGGVTVGNIG). Topologically, residues 246–259 (RQLAMGVPEKPHSD) are cytoplasmic. The short motif at 253–259 (PEKPHSD) is the KxHxx element.

This sequence belongs to the INSIG family. In terms of assembly, interacts with SCAP; interaction is direct and only takes place in the presence of sterols; it prevents interaction between SCAP and the coat protein complex II (COPII). Associates with the SCAP-SREBP complex (composed of SCAP and SREBF1/SREBP1 or SREBF2/SREBP2); association is mediated via its interaction with SCAP and only takes place in the presence of sterols. Interaction with SCAP is mutually exclusive with PAQR3. Interacts with HMGCR (via its SSD); the interaction, accelerated by sterols, leads to the recruitment of HMGCR to AMFR/gp78 for its ubiquitination by the sterol-mediated ERAD pathway. Interacts with AMFR/gp78 (via its membrane domain); the interaction recruits HMCR at the ER membrane for its ubiquitination and degradation by the sterol-mediated ERAD pathway. Interacts with SOAT2/ACAT2; leading to promote recruitment of AMFR/gp78 and subsequent ubiquitination of SOAT2/ACAT2. Interacts with RNF139. Interacts with RNF145. Phosphorylation at Ser-189 by PCK1 reduces binding to oxysterol, disrupting the interaction between INSIG1 and SCAP, thereby promoting nuclear translocation of SREBP proteins (SREBF1/SREBP1 or SREBF2/SREBP2) and subsequent transcription of downstream lipogenesis-related genes. Post-translationally, ubiquitinated by AMFR/gp78 in response to sterol deprivation, leading to its degradation: when the SCAP-SREBP complex becomes dissociated from INSIG1, INSIG1 is then ubiquitinated and degraded in proteasomes. Although ubiquitination is required for rapid INSIG1 degradation, it is not required for release of the SCAP-SREBP complex. Ubiquitinated by RNF139.

Its subcellular location is the endoplasmic reticulum membrane. Its function is as follows. Oxysterol-binding protein that mediates feedback control of cholesterol synthesis by controlling both endoplasmic reticulum to Golgi transport of SCAP and degradation of HMGCR. Acts as a negative regulator of cholesterol biosynthesis by mediating the retention of the SCAP-SREBP complex in the endoplasmic reticulum, thereby blocking the processing of sterol regulatory element-binding proteins (SREBPs) SREBF1/SREBP1 and SREBF2/SREBP2. Binds oxysterol, including 25-hydroxycholesterol, regulating interaction with SCAP and retention of the SCAP-SREBP complex in the endoplasmic reticulum. In presence of oxysterol, interacts with SCAP, retaining the SCAP-SREBP complex in the endoplasmic reticulum, thereby preventing SCAP from escorting SREBF1/SREBP1 and SREBF2/SREBP2 to the Golgi. Sterol deprivation or phosphorylation by PCK1 reduce oxysterol-binding, disrupting the interaction between INSIG1 and SCAP, thereby promoting Golgi transport of the SCAP-SREBP complex, followed by processing and nuclear translocation of SREBF1/SREBP1 and SREBF2/SREBP2. Also regulates cholesterol synthesis by regulating degradation of HMGCR: initiates the sterol-mediated ubiquitin-mediated endoplasmic reticulum-associated degradation (ERAD) of HMGCR via recruitment of the reductase to the ubiquitin ligases AMFR/gp78 and/or RNF139. Also regulates degradation of SOAT2/ACAT2 when the lipid levels are low: initiates the ubiquitin-mediated degradation of SOAT2/ACAT2 via recruitment of the ubiquitin ligases AMFR/gp78. The polypeptide is Insulin-induced gene 1 protein (Mus musculus (Mouse)).